Reading from the N-terminus, the 103-residue chain is Sperm-associated antigen 11B (103 aa).

A signal peptide spans 1–25 (MRQRLLPSVTSLLLVALLFPGSSQA). N29 carries an N-linked (GlcNAc...) asparagine glycan.

The protein belongs to the SPAG11 family. Specifically expressed in caput and proximal corpus of epididymis (at protein level). Present in the epididymal epithelium and on the sperm surface, with a subacrosomal equatorial distribution on the sperm head (at protein level).

Its subcellular location is the secreted. Has antimicrobial activity against E.coli. Plays a role in the defense response in the male reproductive tract, contributing to sperm maturation, storage and protection. In Homo sapiens (Human), this protein is Sperm-associated antigen 11B.